The following is a 216-amino-acid chain: Uracil phosphoribosyltransferase (216 aa).

Residues arginine 85, arginine 110, and 135–143 each bind 5-phospho-alpha-D-ribose 1-diphosphate; that span reads DPMVATGYS. Residues isoleucine 200 and 205-207 each bind uracil; that span reads GDA. Aspartate 206 provides a ligand contact to 5-phospho-alpha-D-ribose 1-diphosphate.

It belongs to the UPRTase family. It depends on Mg(2+) as a cofactor.

It carries out the reaction UMP + diphosphate = 5-phospho-alpha-D-ribose 1-diphosphate + uracil. Its pathway is pyrimidine metabolism; UMP biosynthesis via salvage pathway; UMP from uracil: step 1/1. Allosterically activated by GTP. Functionally, catalyzes the conversion of uracil and 5-phospho-alpha-D-ribose 1-diphosphate (PRPP) to UMP and diphosphate. This Burkholderia cenocepacia (strain ATCC BAA-245 / DSM 16553 / LMG 16656 / NCTC 13227 / J2315 / CF5610) (Burkholderia cepacia (strain J2315)) protein is Uracil phosphoribosyltransferase.